Here is a 55-residue protein sequence, read N- to C-terminus: MGKSNVIQIRLVSSAETGYFYVTKKNARSATGKMEVRKYDPVARKHVVFREAKIK.

The protein belongs to the bacterial ribosomal protein bL33 family.

The chain is Large ribosomal subunit protein bL33 from Gluconobacter oxydans (strain 621H) (Gluconobacter suboxydans).